Consider the following 234-residue polypeptide: Large ribosomal subunit protein uL1 (234 aa).

It belongs to the universal ribosomal protein uL1 family. As to quaternary structure, part of the 50S ribosomal subunit.

In terms of biological role, binds directly to 23S rRNA. The L1 stalk is quite mobile in the ribosome, and is involved in E site tRNA release. Functionally, protein L1 is also a translational repressor protein, it controls the translation of the L11 operon by binding to its mRNA. This is Large ribosomal subunit protein uL1 from Edwardsiella ictaluri (strain 93-146).